Here is an 894-residue protein sequence, read N- to C-terminus: MIDSAAKENTITPIMSLETEEALNSGGKSCEEQKCKKNATANIKVVENEDSEARLGQTPSGQIFVLPHDPPNRRSILETVDFRVPKTPWDLVVDGVILAQVLLFFVTSGMVRRFLMLGCFFFWRVSYDAGIGYLLHKQSHQQKIVDWIVGMGFFDKTNHPKLYEMTKRQLKAKMDSSYDFENSPVEFNAWLVFRHFVDLVLMCDFCSYVLMACAWLCWPKMNFFAHILRIGAGYLLLVFNLWVKMDAHRVVRDYAWYWGDFFFRLRGTLVFNGVFELAPHPMYSIGYAGYYGMSLITGSYMVLFASIVAHMAQFAFLLFVENPHIARTYGSDSSKAKEFLPHDLVNEPLLPAQKDTVVFFNFDITRVSDVGLALLSVYSIVLVLFTPNSNYARALAVGQAFIWRVAHSLLHGFILSRQSKTKAWTRHFISRGNSALDAWAQWKGLYNLTLCMSYITFIMASWKMYSFPTNWIYGSAFFRHVLGLTFIALHIYTSVSIFDDLGNFGWFYGDFFLPVQSPKLSYRGIYRYLNNPERFFGSAAFWGMALISNSSWIFFLALLAQVSTLGIIRFVEKPHMQRIYGSGLRKEAGVEKTIKQATLKSNITIPTALKQRVKTITSTIDKVIDQTAGAVEEFLDTAGPKVHELLHDTSAHIRYQAQLSVLKVLDPHTKQLGLSNYGLEVDDLSDRKIPFGAPIRVKWNAPANHSTHDWIGLYRVGDNPSTSVTQTSSQGRWSAVQPDVYSSHSKSIEYLSPNKDSGVVCFSDDLLFWKPGMYEFRYHHSKNHVVMTRSQPFEIVLSRCDSVVYEDILTALKPIISACLPGVDLEDSKLPLEDISTDQAKRIVLAIRYAFKLSFEHRVVKVDGKVSVLARRISKAKKILQSFSDSFSAEKKTA.

Topologically, residues 1–90 are lumenal; the sequence is MIDSAAKENT…DFRVPKTPWD (90 aa). A helical transmembrane segment spans residues 91-111; the sequence is LVVDGVILAQVLLFFVTSGMV. Residues 112–113 lie on the Cytoplasmic side of the membrane; sequence RR. The chain crosses the membrane as a helical span at residues 114 to 134; the sequence is FLMLGCFFFWRVSYDAGIGYL. The Lumenal portion of the chain corresponds to 135–195; that stretch reads LHKQSHQQKI…EFNAWLVFRH (61 aa). The helical transmembrane segment at 196 to 216 threads the bilayer; that stretch reads FVDLVLMCDFCSYVLMACAWL. The Cytoplasmic segment spans residues 217-222; it reads CWPKMN. The chain crosses the membrane as a helical span at residues 223–243; the sequence is FFAHILRIGAGYLLLVFNLWV. The Lumenal segment spans residues 244 to 268; that stretch reads KMDAHRVVRDYAWYWGDFFFRLRGT. A helical transmembrane segment spans residues 269 to 289; that stretch reads LVFNGVFELAPHPMYSIGYAG. At 290–299 the chain is on the cytoplasmic side; sequence YYGMSLITGS. The helical transmembrane segment at 300 to 320 threads the bilayer; that stretch reads YMVLFASIVAHMAQFAFLLFV. Residues 321-366 are Lumenal-facing; the sequence is ENPHIARTYGSDSSKAKEFLPHDLVNEPLLPAQKDTVVFFNFDITR. The chain crosses the membrane as a helical span at residues 367–387; the sequence is VSDVGLALLSVYSIVLVLFTP. Over 388 to 394 the chain is Cytoplasmic; that stretch reads NSNYARA. A helical transmembrane segment spans residues 395–415; that stretch reads LAVGQAFIWRVAHSLLHGFIL. Residues 416–447 lie on the Lumenal side of the membrane; sequence SRQSKTKAWTRHFISRGNSALDAWAQWKGLYN. Residues 448–468 traverse the membrane as a helical segment; the sequence is LTLCMSYITFIMASWKMYSFP. At 469 to 470 the chain is on the cytoplasmic side; it reads TN. Residues 471–491 form a helical membrane-spanning segment; that stretch reads WIYGSAFFRHVLGLTFIALHI. The Lumenal segment spans residues 492–538; that stretch reads YTSVSIFDDLGNFGWFYGDFFLPVQSPKLSYRGIYRYLNNPERFFGS. The helical transmembrane segment at 539–559 threads the bilayer; it reads AAFWGMALISNSSWIFFLALL. The Cytoplasmic segment spans residues 560–894; that stretch reads AQVSTLGIIR…DSFSAEKKTA (335 aa).

The protein belongs to the class VI-like SAM-binding methyltransferase superfamily. CHO2 family.

The protein resides in the endoplasmic reticulum membrane. The catalysed reaction is a 1,2-diacyl-sn-glycero-3-phosphoethanolamine + S-adenosyl-L-methionine = a 1,2-diacyl-sn-glycero-3-phospho-N-methylethanolamine + S-adenosyl-L-homocysteine + H(+). Its pathway is phospholipid metabolism; phosphatidylcholine biosynthesis. Functionally, catalyzes the first step of the methylation pathway of phosphatidylcholine biosynthesis, the SAM-dependent methylation of phosphatidylethanolamine (PE) to phosphatidylmonomethylethanolamine (PMME). This chain is Phosphatidylethanolamine N-methyltransferase (cho2), found in Schizosaccharomyces japonicus (strain yFS275 / FY16936) (Fission yeast).